The primary structure comprises 147 residues: MVNFTAEEKTLINGLWSKVNVEEVGGEALGRLLVVYPWTQRFFDSFGNLSSASAIMGNPRVKAHGKKVLTAFGESIKNLDNLKSALAKLSELHCDKLHVDPENFKLLGNVLVIVLASHFGNEFTAEMQAAWQKLVAGVATALSHKYH.

Residues 3–147 (NFTAEEKTLI…VATALSHKYH (145 aa)) enclose the Globin domain. Ser-51 is subject to Phosphoserine. His-64 and His-93 together coordinate heme b.

It belongs to the globin family. As to expression, high expression in yolk sac blood islands, fetal liver, and embryonic erythrocytes. Very low levels in adult liver and spleen.

In terms of biological role, hemoglobin epsilon chain is a beta-type chain found in early embryos. This chain is Hemoglobin subunit epsilon-Y2 (Hbb-y), found in Mus musculus (Mouse).